We begin with the raw amino-acid sequence, 209 residues long: MTEIKLNYHKTHFLTSAPDIRHLPEDSGVEIAFAGRSNAGKSTALNALTNQKNLARTSKTPGRTQLINLFEVEPNCKLVDLPGYGYAAVPEQVKLQWQRSLGEYLQKRECLRGVVILMDIRHPLKDLDQQMIEWAVSAELPVLLLLTKADKLSQSARSKTVKMVREAILPFQGDVQVEAYSALNRIGIDKLATKLDSWFAEIFTQTQEG.

The EngB-type G domain occupies 27-201; it reads SGVEIAFAGR…ATKLDSWFAE (175 aa). GTP-binding positions include 35–42, 62–66, 80–83, 147–150, and 180–182; these read GRSNAGKS, GRTQL, DLPG, TKAD, and YSA. Mg(2+)-binding residues include S42 and T64.

Belongs to the TRAFAC class TrmE-Era-EngA-EngB-Septin-like GTPase superfamily. EngB GTPase family. Mg(2+) is required as a cofactor.

Functionally, necessary for normal cell division and for the maintenance of normal septation. The polypeptide is Probable GTP-binding protein EngB (Glaesserella parasuis serovar 5 (strain SH0165) (Haemophilus parasuis)).